Consider the following 374-residue polypeptide: Ferroptosis suppressor protein 1 (374 aa).

The N-myristoyl glycine moiety is linked to residue Gly-2. A helical transmembrane segment spans residues 13–35 (VVIVGGGFAGIAAATQLKSFGIP). 6-hydroxy-FAD-binding positions include 17 to 21 (GGGFA), Arg-53, and Val-81. Lys-167 carries the N6-acetyllysine modification. Residue Asp-285 coordinates 6-hydroxy-FAD.

The protein belongs to the FAD-dependent oxidoreductase family. The cofactor is 6-hydroxy-FAD. N-myristoylation at Gly-2 mediates the recruitment to lipid droplets and plasma membrane. Post-translationally, acetylation at Lys-167 prevents AIFM2 ubiquitination and degradation, thereby inhibiting ferroptosis. KAT2B mediates acetylation at Lys-167, while HDAC3 removes it. In terms of processing, ubiquitinated. AIFM2 undergoes 'Lys-29'-ubiquitination and proteasomal degradation, which is inhibited by acetylation at Lys-167.

The protein localises to the lipid droplet. The protein resides in the cell membrane. It localises to the cytoplasm. Its subcellular location is the mitochondrion membrane. It is found in the nucleus. The catalysed reaction is ubiquinone-10 + NADH + H(+) = ubiquinol-10 + NAD(+). The enzyme catalyses phylloquinone + NADH + H(+) = phylloquinol + NAD(+). It carries out the reaction menaquinone-4 + NADH + H(+) = menaquinol-4 + NAD(+). It catalyses the reaction menadione + NADH + H(+) = menadiol + NAD(+). The modification by 4-hydroxy-2-nonenal (HNE) adduction in mitochondria results in loss of the oxidoreductase activity and activation of a novel function in mitochondrial oxidative stress signaling. Functionally, a NAD(P)H-dependent oxidoreductase that acts as a key inhibitor of ferroptosis. At the plasma membrane, catalyzes reduction of coenzyme Q/ubiquinone-10 to ubiquinol-10, a lipophilic radical-trapping antioxidant that prevents lipid oxidative damage and consequently ferroptosis. Acts in parallel to GPX4 to suppress phospholipid peroxidation and ferroptosis. This anti-ferroptotic function is independent of cellular glutathione levels. Also acts as a potent radical-trapping antioxidant by mediating warfarin-resistant vitamin K reduction in the canonical vitamin K cycle: catalyzes NAD(P)H-dependent reduction of vitamin K (phylloquinone, menaquinone-4 and menadione) to hydroquinone forms. Hydroquinones act as potent radical-trapping antioxidants inhibitor of phospholipid peroxidation and ferroptosis. May play a role in mitochondrial stress signaling. Upon oxidative stress, associates with the lipid peroxidation end product 4-hydroxy-2-nonenal (HNE) forming a lipid adduct devoid of oxidoreductase activity, which then translocates from mitochondria into the nucleus triggering DNA damage and cell death. The protein is Ferroptosis suppressor protein 1 (aifm2) of Xenopus tropicalis (Western clawed frog).